A 418-amino-acid polypeptide reads, in one-letter code: UPF0261 protein BRA1168/BS1330_II1159 (418 aa).

This sequence belongs to the UPF0261 family.

This is UPF0261 protein BRA1168/BS1330_II1159 from Brucella suis biovar 1 (strain 1330).